The sequence spans 529 residues: Bifunctional purine biosynthesis protein PurH (529 aa).

The MGS-like domain maps to 2–148 (QHLRPIRRAL…KNHKDVTIVV (147 aa)).

This sequence belongs to the PurH family.

The catalysed reaction is (6R)-10-formyltetrahydrofolate + 5-amino-1-(5-phospho-beta-D-ribosyl)imidazole-4-carboxamide = 5-formamido-1-(5-phospho-D-ribosyl)imidazole-4-carboxamide + (6S)-5,6,7,8-tetrahydrofolate. It carries out the reaction IMP + H2O = 5-formamido-1-(5-phospho-D-ribosyl)imidazole-4-carboxamide. The protein operates within purine metabolism; IMP biosynthesis via de novo pathway; 5-formamido-1-(5-phospho-D-ribosyl)imidazole-4-carboxamide from 5-amino-1-(5-phospho-D-ribosyl)imidazole-4-carboxamide (10-formyl THF route): step 1/1. Its pathway is purine metabolism; IMP biosynthesis via de novo pathway; IMP from 5-formamido-1-(5-phospho-D-ribosyl)imidazole-4-carboxamide: step 1/1. The polypeptide is Bifunctional purine biosynthesis protein PurH (Proteus mirabilis (strain HI4320)).